A 369-amino-acid polypeptide reads, in one-letter code: Phospho-N-acetylmuramoyl-pentapeptide-transferase (369 aa).

The next 10 helical transmembrane spans lie at 2-22 (IAILLAVAFGITFTLFTTPFF), 54-74 (GLVIVVASIISYFLANFFLGL), 80-100 (GLLVIFMFVGMSLVGFLDDIL), 113-133 (FYKVVLQSFIAVPFALLTFLV), 158-178 (ALFSLGIIGVFSAWVLYLLWI), 195-215 (LDGLAAGAMIFTMLAYVVIGF), 241-261 (PLDMSILAAAILGSLLGFLWW), 268-288 (IMMGDTGALALGGAAAALSIL), 293-313 (LLFLVLGGLFVIEAGSVILQI), and 347-367 (FWIIAGLFTALGIGLFYADWL).

Belongs to the glycosyltransferase 4 family. MraY subfamily. Requires Mg(2+) as cofactor.

The protein localises to the cell membrane. It catalyses the reaction UDP-N-acetyl-alpha-D-muramoyl-L-alanyl-gamma-D-glutamyl-meso-2,6-diaminopimeloyl-D-alanyl-D-alanine + di-trans,octa-cis-undecaprenyl phosphate = di-trans,octa-cis-undecaprenyl diphospho-N-acetyl-alpha-D-muramoyl-L-alanyl-D-glutamyl-meso-2,6-diaminopimeloyl-D-alanyl-D-alanine + UMP. The protein operates within cell wall biogenesis; peptidoglycan biosynthesis. Its function is as follows. Catalyzes the initial step of the lipid cycle reactions in the biosynthesis of the cell wall peptidoglycan: transfers peptidoglycan precursor phospho-MurNAc-pentapeptide from UDP-MurNAc-pentapeptide onto the lipid carrier undecaprenyl phosphate, yielding undecaprenyl-pyrophosphoryl-MurNAc-pentapeptide, known as lipid I. The sequence is that of Phospho-N-acetylmuramoyl-pentapeptide-transferase from Tropheryma whipplei (strain TW08/27) (Whipple's bacillus).